The following is a 489-amino-acid chain: Rhamnulokinase (489 aa).

Residue 13–17 participates in ATP binding; sequence ASSGR. A disulfide bond links Cys-68 and Cys-222. Residues Gly-83 and 236 to 238 contribute to the substrate site; that span reads HDT. Asp-237 serves as the catalytic Proton acceptor. Thr-259 lines the ATP pocket. Residue Asn-296 participates in substrate binding. Residue Gln-304 participates in ATP binding. Residues Cys-353 and Cys-370 are joined by a disulfide bond. Gly-402 contacts ATP. A disulfide bridge connects residues Cys-413 and Cys-417.

The protein belongs to the rhamnulokinase family. Mg(2+) is required as a cofactor.

The catalysed reaction is L-rhamnulose + ATP = L-rhamnulose 1-phosphate + ADP + H(+). Its pathway is carbohydrate degradation; L-rhamnose degradation; glycerone phosphate from L-rhamnose: step 2/3. Functionally, involved in the catabolism of L-rhamnose (6-deoxy-L-mannose). Catalyzes the transfer of the gamma-phosphate group from ATP to the 1-hydroxyl group of L-rhamnulose to yield L-rhamnulose 1-phosphate. The chain is Rhamnulokinase from Salmonella paratyphi B (strain ATCC BAA-1250 / SPB7).